The chain runs to 70 residues: Basic phospholipase A2 2 (70 aa).

Cys28 and Cys44 are joined by a disulfide. His47 is an active-site residue. Asp48 serves as a coordination point for Ca(2+).

Belongs to the phospholipase A2 family. Group II subfamily. D49 sub-subfamily. It depends on Ca(2+) as a cofactor. In terms of tissue distribution, expressed by the venom gland.

Its subcellular location is the secreted. It catalyses the reaction a 1,2-diacyl-sn-glycero-3-phosphocholine + H2O = a 1-acyl-sn-glycero-3-phosphocholine + a fatty acid + H(+). Snake venom phospholipase A2 (PLA2) that exhibits strong myotoxicity. PLA2 catalyzes the calcium-dependent hydrolysis of the 2-acyl groups in 3-sn-phosphoglycerides. The protein is Basic phospholipase A2 2 of Trimeresurus stejnegeri (Chinese green tree viper).